The sequence spans 294 residues: 4-hydroxy-tetrahydrodipicolinate synthase (294 aa).

Threonine 45 contacts pyruvate. The active-site Proton donor/acceptor is the tyrosine 133. Lysine 162 serves as the catalytic Schiff-base intermediate with substrate. Isoleucine 204 contacts pyruvate.

It belongs to the DapA family. Homotetramer; dimer of dimers.

It localises to the cytoplasm. It catalyses the reaction L-aspartate 4-semialdehyde + pyruvate = (2S,4S)-4-hydroxy-2,3,4,5-tetrahydrodipicolinate + H2O + H(+). Its pathway is amino-acid biosynthesis; L-lysine biosynthesis via DAP pathway; (S)-tetrahydrodipicolinate from L-aspartate: step 3/4. Catalyzes the condensation of (S)-aspartate-beta-semialdehyde [(S)-ASA] and pyruvate to 4-hydroxy-tetrahydrodipicolinate (HTPA). This chain is 4-hydroxy-tetrahydrodipicolinate synthase, found in Bartonella henselae (strain ATCC 49882 / DSM 28221 / CCUG 30454 / Houston 1) (Rochalimaea henselae).